We begin with the raw amino-acid sequence, 301 residues long: POU domain, class 6, transcription factor 1 (301 aa).

2 consecutive repeat copies span residues 11 to 17 and 50 to 56. The 2 X 7 AA repeats of N-A-Q-G-Q-V-I stretch occupies residues 11 to 56; sequence NAQGQVIGALPWVVNSASVATPAPAQSLQVQAVTPQLLLNAQGQVI. The disordered stretch occupies residues 66–88; the sequence is QPVAVRKPSTPESPAKSEVQPIQ. Residues 139–213 form the POU-specific domain; sequence EDGINLEEIR…VLEKWLNEAE (75 aa). Positions 234 to 293 form a DNA-binding region, homeobox; the sequence is KRKRRTSFTPQAIEALNAYFEKNPLPTGQEITEIAKELNYDREVVRVWFCNRRQTLKNTS.

It belongs to the POU transcription factor family. Class-6 subfamily. As to expression, in the embryo, widely expressed, with highest levels in the developing brain and spinal cord. In the adult, mostly found in the brain, where it is diffusely expressed with the exception of an enrichment in layer IV of the neocortex. Also found in kidney, lung, heart, adrenal, skin, and placenta. Low levels in spleen, muscle, liver, anterior pituitary, testis and ovary.

Its subcellular location is the nucleus. Its function is as follows. Transcription factor that binds preferentially to a variant of the octamer motif (5'-ATGATAAT-3'). The sequence is that of POU domain, class 6, transcription factor 1 (Pou6f1) from Rattus norvegicus (Rat).